The following is a 151-amino-acid chain: Large ribosomal subunit protein bL9 (151 aa).

It belongs to the bacterial ribosomal protein bL9 family.

Functionally, binds to the 23S rRNA. This Carboxydothermus hydrogenoformans (strain ATCC BAA-161 / DSM 6008 / Z-2901) protein is Large ribosomal subunit protein bL9.